A 271-amino-acid polypeptide reads, in one-letter code: MVMGVIIIGSIFIKQSLIVTSIFFNQQYPTLESVAERWGLTYSKDAEFELVFENNILSLIKRDEPKLKGISVDFVSGAVAHRRKFGGGRGQSIAKAVGLKQGVTPTVVDGTAGLGRDAFVLASLGCKVIMVERHPVVAALLEDGLRRAYEDSEIGEWMNARMSLFHGSSIDTLADAANAAGTEIDVVYLDPMYPHREKSALVKKEMRVFQSLVGADLDADGLLKPAMELASKRVVVKRPDYAEDLDGVKPSTVIATKKNRFDVYVKAAMIS.

S-adenosyl-L-methionine is bound by residues 116–117 (RD), 132–133 (ER), 168–169 (SS), and Asp-190.

This sequence belongs to the methyltransferase superfamily. RsmJ family.

The protein resides in the cytoplasm. It carries out the reaction guanosine(1516) in 16S rRNA + S-adenosyl-L-methionine = N(2)-methylguanosine(1516) in 16S rRNA + S-adenosyl-L-homocysteine + H(+). Its function is as follows. Specifically methylates the guanosine in position 1516 of 16S rRNA. The protein is Ribosomal RNA small subunit methyltransferase J of Shewanella piezotolerans (strain WP3 / JCM 13877).